Reading from the N-terminus, the 238-residue chain is tRNA (guanine-N(7)-)-methyltransferase (238 aa).

The S-adenosyl-L-methionine site is built by glutamate 68, glutamate 93, aspartate 120, and aspartate 143. Aspartate 143 is an active-site residue. Substrate is bound by residues lysine 147, aspartate 179, and 216–219 (TKFE).

The protein belongs to the class I-like SAM-binding methyltransferase superfamily. TrmB family.

It catalyses the reaction guanosine(46) in tRNA + S-adenosyl-L-methionine = N(7)-methylguanosine(46) in tRNA + S-adenosyl-L-homocysteine. The protein operates within tRNA modification; N(7)-methylguanine-tRNA biosynthesis. Catalyzes the formation of N(7)-methylguanine at position 46 (m7G46) in tRNA. In Aliivibrio salmonicida (strain LFI1238) (Vibrio salmonicida (strain LFI1238)), this protein is tRNA (guanine-N(7)-)-methyltransferase.